The chain runs to 262 residues: Indole-3-glycerol phosphate synthase (262 aa).

It belongs to the TrpC family.

It carries out the reaction 1-(2-carboxyphenylamino)-1-deoxy-D-ribulose 5-phosphate + H(+) = (1S,2R)-1-C-(indol-3-yl)glycerol 3-phosphate + CO2 + H2O. It participates in amino-acid biosynthesis; L-tryptophan biosynthesis; L-tryptophan from chorismate: step 4/5. The protein is Indole-3-glycerol phosphate synthase of Chlorobium luteolum (strain DSM 273 / BCRC 81028 / 2530) (Pelodictyon luteolum).